A 446-amino-acid chain; its full sequence is Phosphoglucosamine mutase (446 aa).

The active-site Phosphoserine intermediate is the S102. Positions 102, 241, 243, and 245 each coordinate Mg(2+). S102 carries the phosphoserine modification.

The protein belongs to the phosphohexose mutase family. Mg(2+) is required as a cofactor. In terms of processing, activated by phosphorylation.

It carries out the reaction alpha-D-glucosamine 1-phosphate = D-glucosamine 6-phosphate. Catalyzes the conversion of glucosamine-6-phosphate to glucosamine-1-phosphate. The protein is Phosphoglucosamine mutase of Yersinia pseudotuberculosis serotype O:1b (strain IP 31758).